The chain runs to 1180 residues: Nonsense-mediated mRNA decay factor SMG7 (1180 aa).

2 TPR repeats span residues 151 to 184 (QHCL…VPSN) and 186 to 218 (QPYN…KFPF). Disordered regions lie at residues 496-636 (PQEK…TQTT), 692-795 (QTAS…SYMQ), 893-913 (CSDQ…SSPL), 1019-1127 (SLFE…WAAQ), and 1148-1180 (SSMM…NPPH). The segment covering 504–520 (LQESSNGEQTPNESTHG) has biased composition (polar residues). Composition is skewed to basic and acidic residues over residues 547–559 (ENIK…REQN), 584–606 (NEQK…KTTD), and 615–627 (TELR…EARK). A compositionally biased stretch (polar residues) spans 692-718 (QTASHPQSANPVQTGKPSHIPYSQQRP). Residues 728–740 (PPQPQQTQPPPPQ) show a composition bias toward pro residues. Residues 741 to 778 (TSQQALQQSVQLQLQQQQQQQQQQQQQQQQSPTKQSSQ) show a composition bias toward low complexity. The segment covering 1026–1038 (WSPSLPASSDHST) has biased composition (polar residues). The span at 1039 to 1065 (PASQSPHSSNPSSLPSSPPTHSHGSMP) shows a compositional bias: low complexity. Positions 1076–1090 (DSRDRRANDRWKAEK) are enriched in basic and acidic residues. Positions 1103–1125 (SASTSSVPETNSWHQGAPTSTWA) are enriched in polar residues.

Its subcellular location is the cytoplasm. The protein localises to the nucleus. Plays a role in nonsense-mediated mRNA decay. Recruits UPF1 to cytoplasmic mRNA decay bodies. Together with SMG5 is thought to provide a link to the mRNA degradation machinery involving exonucleolytic pathways, and to serve as an adapter for UPF1 to protein phosphatase 2A (PP2A), thereby triggering UPF1 dephosphorylation. Required for normal embryonic development. The sequence is that of Nonsense-mediated mRNA decay factor SMG7 from Danio rerio (Zebrafish).